A 401-amino-acid chain; its full sequence is Dual-specificity RNA methyltransferase RlmN (401 aa).

Glutamate 114 functions as the Proton acceptor in the catalytic mechanism. Residues 120-365 enclose the Radical SAM core domain; that stretch reads DKTRGTLCVS…TMVRRTRGDD (246 aa). Cysteine 127 and cysteine 370 are joined by a disulfide. Residues cysteine 134, cysteine 138, and cysteine 141 each coordinate [4Fe-4S] cluster. S-adenosyl-L-methionine contacts are provided by residues 187–188, serine 219, 241–243, and asparagine 327; these read GE and SLH. Cysteine 370 functions as the S-methylcysteine intermediate in the catalytic mechanism.

The protein belongs to the radical SAM superfamily. RlmN family. [4Fe-4S] cluster is required as a cofactor.

It is found in the cytoplasm. It carries out the reaction adenosine(2503) in 23S rRNA + 2 reduced [2Fe-2S]-[ferredoxin] + 2 S-adenosyl-L-methionine = 2-methyladenosine(2503) in 23S rRNA + 5'-deoxyadenosine + L-methionine + 2 oxidized [2Fe-2S]-[ferredoxin] + S-adenosyl-L-homocysteine. It catalyses the reaction adenosine(37) in tRNA + 2 reduced [2Fe-2S]-[ferredoxin] + 2 S-adenosyl-L-methionine = 2-methyladenosine(37) in tRNA + 5'-deoxyadenosine + L-methionine + 2 oxidized [2Fe-2S]-[ferredoxin] + S-adenosyl-L-homocysteine. Functionally, specifically methylates position 2 of adenine 2503 in 23S rRNA and position 2 of adenine 37 in tRNAs. m2A2503 modification seems to play a crucial role in the proofreading step occurring at the peptidyl transferase center and thus would serve to optimize ribosomal fidelity. The protein is Dual-specificity RNA methyltransferase RlmN of Stenotrophomonas maltophilia (strain K279a).